We begin with the raw amino-acid sequence, 444 residues long: Tubulin beta-6 chain (444 aa).

Positions 11, 69, 138, 142, 143, 144, 204, and 226 each coordinate GTP. Glu69 provides a ligand contact to Mg(2+).

Belongs to the tubulin family. Dimer of alpha and beta chains. A typical microtubule is a hollow water-filled tube with an outer diameter of 25 nm and an inner diameter of 15 nM. Alpha-beta heterodimers associate head-to-tail to form protofilaments running lengthwise along the microtubule wall with the beta-tubulin subunit facing the microtubule plus end conferring a structural polarity. Microtubules usually have 13 protofilaments but different protofilament numbers can be found in some organisms and specialized cells. The cofactor is Mg(2+). In terms of tissue distribution, expressed in roots, leaf sheaths, anthers, and suspension cultured cells.

The protein localises to the cytoplasm. Its subcellular location is the cytoskeleton. Tubulin is the major constituent of microtubules, a cylinder consisting of laterally associated linear protofilaments composed of alpha- and beta-tubulin heterodimers. Microtubules grow by the addition of GTP-tubulin dimers to the microtubule end, where a stabilizing cap forms. Below the cap, tubulin dimers are in GDP-bound state, owing to GTPase activity of alpha-tubulin. This Oryza sativa subsp. japonica (Rice) protein is Tubulin beta-6 chain (TUBB6).